A 445-amino-acid chain; its full sequence is Phosphoglucosamine mutase (445 aa).

Residue Ser102 is the Phosphoserine intermediate of the active site. The Mg(2+) site is built by Ser102, Asp241, Asp243, and Asp245. Position 102 is a phosphoserine (Ser102).

This sequence belongs to the phosphohexose mutase family. The cofactor is Mg(2+). Post-translationally, activated by phosphorylation.

The catalysed reaction is alpha-D-glucosamine 1-phosphate = D-glucosamine 6-phosphate. Catalyzes the conversion of glucosamine-6-phosphate to glucosamine-1-phosphate. This chain is Phosphoglucosamine mutase, found in Shewanella denitrificans (strain OS217 / ATCC BAA-1090 / DSM 15013).